The sequence spans 310 residues: Acetaldehyde dehydrogenase 1 (310 aa).

Residue 12-15 (SGNI) participates in NAD(+) binding. Cys127 serves as the catalytic Acyl-thioester intermediate. Residues 163 to 171 (SAGPGTRAN) and Asn282 contribute to the NAD(+) site.

The protein belongs to the acetaldehyde dehydrogenase family.

It carries out the reaction acetaldehyde + NAD(+) + CoA = acetyl-CoA + NADH + H(+). The polypeptide is Acetaldehyde dehydrogenase 1 (Mycobacterium sp. (strain KMS)).